We begin with the raw amino-acid sequence, 365 residues long: Peptide chain release factor 1 (365 aa).

At Q242 the chain carries N5-methylglutamine.

This sequence belongs to the prokaryotic/mitochondrial release factor family. In terms of processing, methylated by PrmC. Methylation increases the termination efficiency of RF1.

The protein localises to the cytoplasm. In terms of biological role, peptide chain release factor 1 directs the termination of translation in response to the peptide chain termination codons UAG and UAA. The chain is Peptide chain release factor 1 from Fusobacterium nucleatum subsp. nucleatum (strain ATCC 25586 / DSM 15643 / BCRC 10681 / CIP 101130 / JCM 8532 / KCTC 2640 / LMG 13131 / VPI 4355).